We begin with the raw amino-acid sequence, 763 residues long: Sphingoid long-chain bases kinase 1 (763 aa).

A disordered region spans residues 34-81 (TGGSQQSSPIVFPEKRNKKVKASSRRGEVTNDPQVKPKPDEHRIDIGG). A compositionally biased stretch (basic and acidic residues) spans 58-81 (RRGEVTNDPQVKPKPDEHRIDIGG). A DAGKc domain is found at 245–384 (KSAPKMLVIL…TDVFAVEWIH (140 aa)). ATP is bound by residues 255–257 (NPR) and T287. Substrate is bound at residue 313–316 (GGDG). The Proton donor/acceptor role is filled by D315. ATP contacts are provided by residues E320, 345-347 (GSD), and R418. Residues 561–603 (MGLTSVQDPPTRCSWGNTGGQDREDISSTVSDPGPIWDAGPKW) are disordered. 733-735 (DGE) is a binding site for ATP.

In terms of tissue distribution, expressed in roots, stems, leaves and at higher levels in flowers.

Involved in the production of sphingolipid metabolites. Active on sphingosine, phytosphingosine (PHS, 4-hydroxysphinganine), D-erythro-dihydrosphingosine, D-erythro-sphingosine and trans-4, trans-8-sphingadienine, an LCB found exclusively in plants, but not on N-acetyl-dihydrosphingosine (C2-dihydroceramide) and D-threo-dihydrosphingosine. The polypeptide is Sphingoid long-chain bases kinase 1 (LCBK1) (Arabidopsis thaliana (Mouse-ear cress)).